The primary structure comprises 338 residues: S-adenosylmethionine:tRNA ribosyltransferase-isomerase (338 aa).

The protein belongs to the QueA family. Monomer.

Its subcellular location is the cytoplasm. The enzyme catalyses 7-aminomethyl-7-carbaguanosine(34) in tRNA + S-adenosyl-L-methionine = epoxyqueuosine(34) in tRNA + adenine + L-methionine + 2 H(+). It functions in the pathway tRNA modification; tRNA-queuosine biosynthesis. In terms of biological role, transfers and isomerizes the ribose moiety from AdoMet to the 7-aminomethyl group of 7-deazaguanine (preQ1-tRNA) to give epoxyqueuosine (oQ-tRNA). This Francisella tularensis subsp. holarctica (strain FTNF002-00 / FTA) protein is S-adenosylmethionine:tRNA ribosyltransferase-isomerase.